Reading from the N-terminus, the 64-residue chain is Small ribosomal subunit protein bS21 (64 aa).

The protein belongs to the bacterial ribosomal protein bS21 family.

The chain is Small ribosomal subunit protein bS21 from Sulfurihydrogenibium sp. (strain YO3AOP1).